Reading from the N-terminus, the 1589-residue chain is Pentafunctional AROM polypeptide (1589 aa).

A 3-dehydroquinate synthase region spans residues 1-384; that stretch reads MAAPTTIKIL…HEQQASVVSN (384 aa). NAD(+)-binding positions include 44–46, 81–84, 114–116, and aspartate 119; these read DTT, ELSK, and GGV. Residue arginine 130 coordinates 7-phospho-2-dehydro-3-deoxy-D-arabino-heptonate. Residue 139–140 participates in NAD(+) binding; that stretch reads TT. The 7-phospho-2-dehydro-3-deoxy-D-arabino-heptonate site is built by aspartate 146 and lysine 152. An NAD(+)-binding site is contributed by lysine 161. Residue asparagine 162 coordinates 7-phospho-2-dehydro-3-deoxy-D-arabino-heptonate. NAD(+) contacts are provided by residues 179-182 and asparagine 190; that span reads FLNT. Residue glutamate 194 coordinates Zn(2+). Residues 194-197 and lysine 250 contribute to the 7-phospho-2-dehydro-3-deoxy-D-arabino-heptonate site; that span reads EVIK. Residue glutamate 260 is the Proton acceptor; for 3-dehydroquinate synthase activity of the active site. Residues 264-268 and histidine 271 contribute to the 7-phospho-2-dehydro-3-deoxy-D-arabino-heptonate site; that span reads RNLLN. Residue histidine 271 participates in Zn(2+) binding. Histidine 275 serves as the catalytic Proton acceptor; for 3-dehydroquinate synthase activity. 7-phospho-2-dehydro-3-deoxy-D-arabino-heptonate is bound by residues histidine 287 and lysine 356. Position 287 (histidine 287) interacts with Zn(2+). Residues 397-841 are EPSP synthase; sequence VSPGVPKSLQ…WDTLAQLFKA (445 aa). Cysteine 823 functions as the For EPSP synthase activity in the catalytic mechanism. Residues 861–1052 form a shikimate kinase region; that stretch reads ASIFIIGMRG…KKKPQSFFVS (192 aa). 867-874 is an ATP binding site; sequence GMRGAGKT. A 3-dehydroquinase region spans residues 1053 to 1273; that stretch reads LTLPDLRPSA…AAPGQLSAQD (221 aa). Residue histidine 1176 is the Proton acceptor; for 3-dehydroquinate dehydratase activity of the active site. Residue lysine 1204 is the Schiff-base intermediate with substrate; for 3-dehydroquinate dehydratase activity of the active site. The shikimate dehydrogenase stretch occupies residues 1286-1589; it reads PRKFAIFGKP…VMNPGTDNRG (304 aa).

The protein in the N-terminal section; belongs to the sugar phosphate cyclases superfamily. Dehydroquinate synthase family. This sequence in the 2nd section; belongs to the EPSP synthase family. It in the 3rd section; belongs to the shikimate kinase family. In the 4th section; belongs to the type-I 3-dehydroquinase family. The protein in the C-terminal section; belongs to the shikimate dehydrogenase family. As to quaternary structure, homodimer. Requires Zn(2+) as cofactor.

The protein resides in the cytoplasm. It carries out the reaction 7-phospho-2-dehydro-3-deoxy-D-arabino-heptonate = 3-dehydroquinate + phosphate. It catalyses the reaction 3-dehydroquinate = 3-dehydroshikimate + H2O. The enzyme catalyses shikimate + NADP(+) = 3-dehydroshikimate + NADPH + H(+). The catalysed reaction is shikimate + ATP = 3-phosphoshikimate + ADP + H(+). It carries out the reaction 3-phosphoshikimate + phosphoenolpyruvate = 5-O-(1-carboxyvinyl)-3-phosphoshikimate + phosphate. It functions in the pathway metabolic intermediate biosynthesis; chorismate biosynthesis; chorismate from D-erythrose 4-phosphate and phosphoenolpyruvate: step 2/7. Its pathway is metabolic intermediate biosynthesis; chorismate biosynthesis; chorismate from D-erythrose 4-phosphate and phosphoenolpyruvate: step 3/7. The protein operates within metabolic intermediate biosynthesis; chorismate biosynthesis; chorismate from D-erythrose 4-phosphate and phosphoenolpyruvate: step 4/7. It participates in metabolic intermediate biosynthesis; chorismate biosynthesis; chorismate from D-erythrose 4-phosphate and phosphoenolpyruvate: step 5/7. It functions in the pathway metabolic intermediate biosynthesis; chorismate biosynthesis; chorismate from D-erythrose 4-phosphate and phosphoenolpyruvate: step 6/7. Its function is as follows. The AROM polypeptide catalyzes 5 consecutive enzymatic reactions in prechorismate polyaromatic amino acid biosynthesis. This chain is Pentafunctional AROM polypeptide, found in Coccidioides posadasii (strain C735) (Valley fever fungus).